A 258-amino-acid chain; its full sequence is Regulatory protein RecX (258 aa).

Belongs to the RecX family.

Its subcellular location is the cytoplasm. Its function is as follows. Modulates RecA activity. The sequence is that of Regulatory protein RecX from Streptococcus mutans serotype c (strain ATCC 700610 / UA159).